Consider the following 57-residue polypeptide: Small ribosomal subunit protein bS21 (57 aa).

It belongs to the bacterial ribosomal protein bS21 family.

This is Small ribosomal subunit protein bS21 from Bacillus anthracis (strain A0248).